A 334-amino-acid polypeptide reads, in one-letter code: MAVFTTVSQDEIARWLLDFDLGEVRELRGIASGIENSNFFLTMEHEGQTRQYVLTIFERLSFTQLPYYLHLMAHLAERGIRVPAPIPARDGEILRPLKGKPATIVTRLPGASQLAPDAQHCAEVGDMLARMHLAGADYPRRQPNLRSLPWWQQTEREILPFLDAGQRALLQREIAHQAAFFASAAYASLGEGPCHCDLFRDNALFEEDASGRHRLGGFFDFYFAGNDKWLFDVAVTVNDWCIDLATGELDAERAQALLRAYHAVRPLTETEAAHWQDMLRAGALRFWVSRLWDFYLPREADMLQPHDPTHFERILRRRLDAQPANPESAPLPWI.

Belongs to the pseudomonas-type ThrB family.

It carries out the reaction L-homoserine + ATP = O-phospho-L-homoserine + ADP + H(+). The protein operates within amino-acid biosynthesis; L-threonine biosynthesis; L-threonine from L-aspartate: step 4/5. The protein is Homoserine kinase of Cupriavidus taiwanensis (strain DSM 17343 / BCRC 17206 / CCUG 44338 / CIP 107171 / LMG 19424 / R1) (Ralstonia taiwanensis (strain LMG 19424)).